Here is a 306-residue protein sequence, read N- to C-terminus: NADH-cytochrome b5 reductase 2-B (306 aa).

Residues 12 to 32 (PLLLSSGIAVTAAAAVYFSTG) form a helical membrane-spanning segment. In terms of domain architecture, FAD-binding FR-type spans 53-157 (STWVDLPLVK…TGPIVKYEWK (105 aa)). 160-195 (KFDSVTLLGAGSGITPLYQLMGSILSNPEDKTKINL) contributes to the FAD binding site.

It belongs to the flavoprotein pyridine nucleotide cytochrome reductase family. Requires FAD as cofactor.

Its subcellular location is the mitochondrion outer membrane. It carries out the reaction 2 Fe(III)-[cytochrome b5] + NADH = 2 Fe(II)-[cytochrome b5] + NAD(+) + H(+). May mediate the reduction of outer membrane cytochrome b5. This chain is NADH-cytochrome b5 reductase 2-B (MCR1B), found in Vanderwaltozyma polyspora (strain ATCC 22028 / DSM 70294 / BCRC 21397 / CBS 2163 / NBRC 10782 / NRRL Y-8283 / UCD 57-17) (Kluyveromyces polysporus).